We begin with the raw amino-acid sequence, 593 residues long: Chromodomain Y-like protein (593 aa).

The span at 1 to 14 shows a compositional bias: polar residues; the sequence is MGIGNSQPNSQEAQ. The interval 1–30 is disordered; it reads MGIGNSQPNSQEAQLCTLPEKAEQPTDDNT. The Chromo domain occupies 56-116; sequence TQVESIVDKR…RHNERQKEGS (61 aa). Residues 56 to 304 form an interaction with EZH2 region; the sequence is TQVESIVDKR…TIQTSVTGVT (249 aa). Ser-83 carries the post-translational modification Phosphoserine. The interval 110 to 158 is disordered; sequence ERQKEGSLARASRASPSNARKQISRSTHSTLSKTNSKALVVGKDHESKS. The span at 117–129 shows a compositional bias: low complexity; the sequence is LARASRASPSNAR. At Lys-130 the chain carries N6,N6,N6-trimethyllysine; by EHMT2; alternate. Lys-130 bears the N6,N6-dimethyllysine; by EHMT2; alternate mark. Position 130 is an N6-methyllysine; by EHMT2; alternate (Lys-130). Residues 133–146 are compositionally biased toward polar residues; sequence SRSTHSTLSKTNSK. Phosphoserine occurs at positions 165, 196, and 211. Residues 200-223 form a disordered region; sequence GRTSVDGFQGESPEKLDPVDQGAE. Residues 357 to 589 are acetyl-CoA-binding domain; that stretch reads SENNSLNPEV…DSMLKYLQRK (233 aa).

In terms of assembly, forms multimers and multimerization is required for stable binding to chromatin. Interacts with HDAC1 and HDAC2 via its C-terminal acetyl-CoA-binding domain. Interacts with EZH2, EED, SUZ12, REST, EHMT1 and EHMT2. Part of a complex containing at least CDYL, REST, WIZ, SETB1, EHMT1 and EHMT2. Part of a complex containing at least CDYL, MIER1, MIER2, HDAC1 and HDAC2. Interacts with CHAF1A and CHAF1B; bridging the CAF-1 complex to the MCM2-7 (MCM) complex. Interacts with MCM3 and MCM5; bridging the CAF-1 complex to the MCM2-7 (MCM) complex. Interacts with EHMT2 and PRDM9; interaction only takes place when PRDM9 is bound to hotspot DNA. As to expression, highly expressed in testis (at protein level). Expressed in the hippocampus (at protein level). Expressed in the medial prefrontal cortex, prelimbic cortex, intralimbic cortex and cingulate cortex area (at protein level). Isoform 1: Expressed as 2 transcripts encoding the same protein, a ubiquitous transcript and a highly expressed testis-specific transcript.

The protein localises to the nucleus. It is found in the chromosome. The catalysed reaction is L-lysyl-[protein] + acetyl-CoA = N(6)-acetyl-L-lysyl-[protein] + CoA + H(+). It carries out the reaction 3-hydroxybutanoyl-CoA = (2E)-butenoyl-CoA + H2O. In terms of biological role, chromatin reader protein that recognizes and binds histone H3 trimethylated at 'Lys-9', dimethylated at 'Lys-27' and trimethylated at 'Lys-27' (H3K9me3, H3K27me2 and H3K27me3, respectively). Part of multimeric repressive chromatin complexes, where it is required for transmission and restoration of repressive histone marks, thereby preserving the epigenetic landscape. Required for chromatin targeting and maximal enzymatic activity of Polycomb repressive complex 2 (PRC2); acts as a positive regulator of PRC2 activity by bridging the pre-existing histone H3K27me3 and newly recruited PRC2 on neighboring nucleosomes. Acts as a corepressor for REST by facilitating histone-lysine N-methyltransferase EHMT2 recruitment and H3K9 dimethylation at REST target genes for repression. Involved in X chromosome inactivation in females: recruited to Xist RNA-coated X chromosome and facilitates propagation of H3K9me2 by anchoring EHMT2. Promotes EZH2 accumulation and H3K27me3 methylation at DNA double strand breaks (DSBs), thereby facilitating transcriptional repression at sites of DNA damage and homology-directed repair of DSBs. Required for neuronal migration during brain development by repressing expression of RHOA. By repressing the expression of SCN8A, contributes to the inhibition of intrinsic neuronal excitability and epileptogenesis. In addition to acting as a chromatin reader, acts as a hydro-lyase. Shows crotonyl-coA hydratase activity by mediating the conversion of crotonyl-CoA ((2E)-butenoyl-CoA) to beta-hydroxybutyryl-CoA (3-hydroxybutanoyl-CoA), thereby acting as a negative regulator of histone crotonylation. Histone crotonylation is required during spermatogenesis; down-regulation of histone crotonylation by CDYL regulates the reactivation of sex chromosome-linked genes in round spermatids and histone replacement in elongating spermatids. By regulating histone crotonylation and trimethylation of H3K27, may be involved in stress-induced depression-like behaviors, possibly by regulating VGF expression. May have histone acetyltransferase activity; such activity is however unsure in vivo. Not able to recognize and bind histone H3K9me3, histone H3K27me2 and histone H3K27me3, due to the presence of a N-terminal extension that inactivates the chromo domain. In Mus musculus (Mouse), this protein is Chromodomain Y-like protein.